The sequence spans 400 residues: S-adenosylmethionine synthase (400 aa).

136 to 141 (GTGSTD) is an ATP binding site.

It belongs to the AdoMet synthase 2 family. It depends on Mg(2+) as a cofactor.

It catalyses the reaction L-methionine + ATP + H2O = S-adenosyl-L-methionine + phosphate + diphosphate. It functions in the pathway amino-acid biosynthesis; S-adenosyl-L-methionine biosynthesis; S-adenosyl-L-methionine from L-methionine: step 1/1. Its function is as follows. Catalyzes the formation of S-adenosylmethionine from methionine and ATP. The sequence is that of S-adenosylmethionine synthase from Methanoregula boonei (strain DSM 21154 / JCM 14090 / 6A8).